A 222-amino-acid polypeptide reads, in one-letter code: Superoxide dismutase [Cu-Zn], chloroplastic (222 aa).

The transit peptide at 1–68 (MAAHTILASA…AASKPLTIVA (68 aa)) directs the protein to the chloroplast. Cu cation is bound by residues His-114, His-116, and His-131. An intrachain disulfide couples Cys-125 to Cys-214. Zn(2+) contacts are provided by His-131, His-139, His-148, and Asp-151. His-188 is a binding site for Cu cation.

Belongs to the Cu-Zn superoxide dismutase family. In terms of assembly, homotetramer. Cu cation is required as a cofactor. The cofactor is Zn(2+).

The protein resides in the plastid. It localises to the chloroplast. The catalysed reaction is 2 superoxide + 2 H(+) = H2O2 + O2. Functionally, destroys radicals which are normally produced within the cells and which are toxic to biological systems. This is Superoxide dismutase [Cu-Zn], chloroplastic (SODCP) from Spinacia oleracea (Spinach).